Here is a 156-residue protein sequence, read N- to C-terminus: Probable chemoreceptor glutamine deamidase CheD (156 aa).

The protein belongs to the CheD family.

It catalyses the reaction L-glutaminyl-[protein] + H2O = L-glutamyl-[protein] + NH4(+). Functionally, probably deamidates glutamine residues to glutamate on methyl-accepting chemotaxis receptors (MCPs), playing an important role in chemotaxis. The sequence is that of Probable chemoreceptor glutamine deamidase CheD from Sulfurimonas denitrificans (strain ATCC 33889 / DSM 1251) (Thiomicrospira denitrificans (strain ATCC 33889 / DSM 1251)).